Here is a 663-residue protein sequence, read N- to C-terminus: Polyunsaturated fatty acid lipoxygenase ALOX15 (663 aa).

Positions 2–115 constitute a PLAT domain; that stretch reads GVYRIRVSTG…ILNLPEGTGC (114 aa). In terms of domain architecture, Lipoxygenase spans 116–663; it reads TVVEDSQGLF…PSLVENSVAI (548 aa). Residues histidine 361, histidine 366, histidine 541, histidine 545, and isoleucine 663 each coordinate Fe cation.

This sequence belongs to the lipoxygenase family. Interacts with PEBP1; in response to IL13/interleukin-13, prevents the interaction of PEBP1 with RAF1 to activate the ERK signaling cascade. Fe cation is required as a cofactor. In terms of tissue distribution, found in pituitary and pineal glands as well as leukocytes, kidney, aorta, small intestine and cornea. Also expressed by resident peritoneal macrophages (at protein level).

It is found in the cytoplasm. It localises to the cytosol. Its subcellular location is the cell membrane. The protein localises to the lipid droplet. The enzyme catalyses (5Z,8Z,11Z,14Z)-eicosatetraenoate + O2 = (12S)-hydroperoxy-(5Z,8Z,10E,14Z)-eicosatetraenoate. It catalyses the reaction (5Z,8Z,11Z,14Z)-eicosatetraenoate + O2 = (15S)-hydroperoxy-(5Z,8Z,11Z,13E)-eicosatetraenoate. It carries out the reaction (9Z,12Z)-octadecadienoate + O2 = (13S)-hydroperoxy-(9Z,11E)-octadecadienoate. The catalysed reaction is (5Z,8Z,11Z,14Z)-eicosatetraenoate + 2 O2 = (14R,15S)-dihydroperoxy-(5Z,8Z,10E,12E)-eicosatetraenoate. The enzyme catalyses (5Z,8Z,11Z,14Z)-eicosatetraenoate + 2 O2 = (8S,15S)-dihydroperoxy-(5Z,9E,11Z,13E)-eicosatetraenoate. It catalyses the reaction (14S,15R)-epoxy-(5Z,8Z,11Z)-eicosatrienoate + O2 = (8S)-hydroperoxy-(14S,15R)-epoxy-(5Z,9E,11Z)-eicosatrienoate. It carries out the reaction (14S,15R)-epoxy-(5Z,8Z,11Z)-eicosatrienoate + O2 = (12S)-hydroperoxy-(14S,15R)-epoxy-(5Z,8Z,10E)-eicosatrienoate. The catalysed reaction is (14R,15S)-epoxy-(5Z,8Z,11Z)-eicosatrienoate + O2 = (5S)-hydroperoxy-(14R,15S)-epoxy-(6E,8Z,11Z)-eicosatrienoate. The enzyme catalyses (14R,15S)-epoxy-(5Z,8Z,11Z)-eicosatrienoate + O2 = (12S)-hydroperoxy-(14R,15S)-epoxy-(5Z,8Z,10E)-eicosatrienoate. It catalyses the reaction (15R)-hydroperoxy-(5Z,8Z,11Z,13E)-eicosatetraenoate = 15-oxo-(5Z,8Z,11Z,13E)-eicosatetraenoate + H2O. It carries out the reaction (15S)-hydroperoxy-(5Z,8Z,11Z,13E)-eicosatetraenoate = (14S,15S)-epoxy-(5Z,8Z,10E,12E)-eicosatetraenoate + H2O. The catalysed reaction is (12S)-hydroperoxy-(5Z,8Z,10E,14Z)-eicosatetraenoate = (8S)-hydroxy-(11S,12S)-epoxy-(5Z,9E,14Z)-eicosatrienoate. The enzyme catalyses (4Z,7Z,10Z,13Z,16Z)-docosapentaenoate + O2 = 14-hydroperoxy-(4Z,7Z,10Z,12E,16Z)-docosapentaenoate. It catalyses the reaction (7Z,10Z,13Z,16Z,19Z)-docosapentaenoate + O2 = 14-hydroperoxy-(7Z,10Z,12E,16Z,19Z)-docosapentaenoate. It carries out the reaction (4Z,7Z,10Z,13Z,16Z,19Z)-docosahexaenoate + O2 = (14S)-hydroperoxy-(4Z,7Z,10Z,12E,16Z,19Z)-docosahexaenoate. The catalysed reaction is (4Z,7Z,10Z,13Z,16Z,19Z)-docosahexaenoate + O2 = (17S)-hydroperoxy-(4Z,7Z,10Z,13Z,15E,19Z)-docosahexaenoate. The enzyme catalyses (7S)-hydroperoxy-(4Z,8E,10Z,13Z,16Z,19Z)-docosahexaenoate + O2 = (7S,14S)-dihydroperoxy-(4Z,8E,10Z,12E,16Z,19Z)-docosahexaenoate. It catalyses the reaction (7S)-hydroperoxy-(4Z,8E,10Z,13Z,16Z,19Z)-docosahexaenoate + O2 = (7S,17S)-dihydroperoxy-(4Z,8E,10Z,13Z,15E,19Z)-docosahexaenoate. It carries out the reaction (4Z,7Z,10Z,13Z,16Z,19Z)-docosahexaenoate + O2 = (11S)-hydroperoxy-(4Z,7Z,9E,13Z,16Z,19Z)-docosahexaenoate. The catalysed reaction is N-(5Z,8Z,11Z,14Z)-eicosatetraenoyl-taurine + O2 = N-(12S)-hydroperoxy-(5Z,8Z,10E,14Z)-eicosatetraenoyl-taurine. The enzyme catalyses N-(5Z,8Z,11Z,14Z)-eicosatetraenoyl-gamma-aminobutanoate + O2 = N-(12S)-hydroperoxy-(5Z,8Z,10E,14Z)-eicosatetraenoyl-gamma-aminobutanoate. It catalyses the reaction N-(5Z,8Z,11Z,14Z)-eicosatetraenoyl-glycine + O2 = N-(12S)-hydroperoxy-(5Z,8Z,10E,14Z)-eicosatetraenoyl-glycine. It carries out the reaction N-(5Z,8Z,11Z,14Z)-eicosatetraenoyl-L-alanine + O2 = N-(12S)-hydroperoxy-(5Z,8Z,10E,14Z)-eicosatetraenoyl-alanine. The catalysed reaction is N-(5Z,8Z,11Z,14Z)-eicosatetraenoyl-taurine + O2 = N-(15S)-hydroperoxy-(5Z,8Z,11Z,13E)-eicosatetraenoyl-taurine. The enzyme catalyses N-(5Z,8Z,11Z,14Z)-eicosatetraenoyl-gamma-aminobutanoate + O2 = N-(15S)-hydroperoxy-(5Z,8Z,11Z,13E)-eicosatetraenoyl-gamma-aminobutanoate. It catalyses the reaction N-(5Z,8Z,11Z,14Z)-eicosatetraenoyl-glycine + O2 = N-(15S)-hydroperoxy-(5Z,8Z,11Z,13E)-eicosatetraenoyl-glycine. It carries out the reaction N-(5Z,8Z,11Z,14Z)-eicosatetraenoyl-L-alanine + O2 = N-(15S)-hydroperoxy-(5Z,8Z,11Z,13E)-eicosatetraenoyl-alanine. The protein operates within lipid metabolism; hydroperoxy eicosatetraenoic acid biosynthesis. Functionally, non-heme iron-containing dioxygenase that catalyzes the stereo-specific peroxidation of free and esterified polyunsaturated fatty acids generating a spectrum of bioactive lipid mediators. It inserts peroxyl groups at C12 or C15 of arachidonate ((5Z,8Z,11Z,14Z)-eicosatetraenoate) producing both 12-hydroperoxyeicosatetraenoate/12-HPETE and 15-hydroperoxyeicosatetraenoate/15-HPETE. It may then act on 12-HPETE to produce hepoxilins, which may show pro-inflammatory properties. Can also peroxidize linoleate ((9Z,12Z)-octadecadienoate) to 13-hydroperoxyoctadecadienoate. May participate in the sequential oxidations of DHA ((4Z,7Z,10Z,13Z,16Z,19Z)-docosahexaenoate) to generate specialized pro-resolving mediators (SPMs)like resolvin D5 ((7S,17S)-diHPDHA) and (7S,14S)-diHPDHA, that actively down-regulate the immune response and have anti-aggregation properties with platelets. Can convert epoxy fatty acids to hydroperoxy-epoxides derivatives followed by an intramolecular nucleophilic substitution leading to the formation of monocyclic endoperoxides. Plays an important role during the maintenance of self-tolerance by peroxidizing membrane-bound phosphatidylethanolamine which can then signal the sorting process for clearance of apoptotic cells during inflammation and prevent an autoimmune response. In addition to its role in the immune and inflammatory responses, this enzyme may play a role in epithelial wound healing in the cornea through production of lipoxin A4 (LXA(4)) and docosahexaenoic acid-derived neuroprotectin D1 (NPD1; 10R,17S-HDHA), both lipid autacoids exhibit anti-inflammatory and neuroprotective properties. Furthermore, it may regulate actin polymerization which is crucial for several biological processes such as the phagocytosis of apoptotic cells. It is also implicated in the generation of endogenous ligands for peroxisome proliferator activated receptor (PPAR-gamma), hence modulating macrophage development and function. It may also exert a negative effect on skeletal development by regulating bone mass through this pathway. As well as participates in ER stress and downstream inflammation in adipocytes, pancreatic islets, and liver. Finally, it is also involved in the cellular response to IL13/interleukin-13. This is Polyunsaturated fatty acid lipoxygenase ALOX15 from Mus musculus (Mouse).